The chain runs to 173 residues: Peptide deformylase (173 aa).

Residues cysteine 91 and histidine 133 each coordinate Fe cation. Glutamate 134 is an active-site residue. Histidine 137 is a Fe cation binding site.

The protein belongs to the polypeptide deformylase family. It depends on Fe(2+) as a cofactor.

It carries out the reaction N-terminal N-formyl-L-methionyl-[peptide] + H2O = N-terminal L-methionyl-[peptide] + formate. Functionally, removes the formyl group from the N-terminal Met of newly synthesized proteins. Requires at least a dipeptide for an efficient rate of reaction. N-terminal L-methionine is a prerequisite for activity but the enzyme has broad specificity at other positions. This Buchnera aphidicola subsp. Acyrthosiphon pisum (strain 5A) protein is Peptide deformylase.